The sequence spans 248 residues: ATP synthase subunit a (248 aa).

5 helical membrane-spanning segments follow: residues 31–51 (GQVLIASWIAIALILTVVLLG), 90–110 (VPYVGTLFLFIFVSNWMGNLF), 129–149 (INTTAGLALLTSVMYFVAGIS), 195–215 (VIAVLVLLVPLLIPVPVMILF), and 216–236 (LFTGAIQALIFSTLSAAYIGE).

It belongs to the ATPase A chain family. In terms of assembly, F-type ATPases have 2 components, CF(1) - the catalytic core - and CF(0) - the membrane proton channel. CF(1) has five subunits: alpha(3), beta(3), gamma(1), delta(1), epsilon(1). CF(0) has four main subunits: a, b, b' and c.

It is found in the cellular thylakoid membrane. Its function is as follows. Key component of the proton channel; it plays a direct role in the translocation of protons across the membrane. The sequence is that of ATP synthase subunit a from Synechococcus sp. (strain JA-3-3Ab) (Cyanobacteria bacterium Yellowstone A-Prime).